Reading from the N-terminus, the 206-residue chain is Small ribosomal subunit protein uS5 (206 aa).

Positions 1 to 15 are enriched in polar residues; it reads MTDTPTKQETQSNKD. Positions 1–50 are disordered; it reads MTDTPTKQETQSNKDNVPGAIPVEQKKNNRNDRKRNRRGDSKNLERDSDW. The span at 38–50 shows a compositional bias: basic and acidic residues; the sequence is RGDSKNLERDSDW. The S5 DRBM domain maps to 50 to 113; it reads WQERVVQIRR…SDGKKNLVRV (64 aa).

It belongs to the universal ribosomal protein uS5 family. As to quaternary structure, part of the 30S ribosomal subunit. Contacts proteins S4 and S8.

With S4 and S12 plays an important role in translational accuracy. In terms of biological role, located at the back of the 30S subunit body where it stabilizes the conformation of the head with respect to the body. This chain is Small ribosomal subunit protein uS5, found in Prochlorococcus marinus (strain MIT 9215).